The following is a 298-amino-acid chain: Protease HtpX homolog (298 aa).

The next 2 helical transmembrane spans lie at 14–34 (VVLL…AGYL) and 39–59 (YAMG…SMIF). His143 contacts Zn(2+). Glu144 is a catalytic residue. Zn(2+) is bound at residue His147. The next 2 membrane-spanning stretches (helical) occupy residues 158-178 (IAVA…RMLW) and 197-217 (IITL…ASLI). Glu226 is a binding site for Zn(2+).

The protein belongs to the peptidase M48B family. The cofactor is Zn(2+).

Its subcellular location is the cell membrane. This is Protease HtpX homolog from Streptococcus pyogenes serotype M1.